The sequence spans 222 residues: Ribosomal RNA small subunit methyltransferase G (222 aa).

S-adenosyl-L-methionine contacts are provided by residues Gly80, Leu85, 131-132 (VE), and Arg148.

It belongs to the methyltransferase superfamily. RNA methyltransferase RsmG family.

Its subcellular location is the cytoplasm. The enzyme catalyses guanosine(527) in 16S rRNA + S-adenosyl-L-methionine = N(7)-methylguanosine(527) in 16S rRNA + S-adenosyl-L-homocysteine. Its function is as follows. Specifically methylates the N7 position of guanine in position 527 of 16S rRNA. The polypeptide is Ribosomal RNA small subunit methyltransferase G (Polynucleobacter asymbioticus (strain DSM 18221 / CIP 109841 / QLW-P1DMWA-1) (Polynucleobacter necessarius subsp. asymbioticus)).